We begin with the raw amino-acid sequence, 266 residues long: Protein crossbronx-like (266 aa).

A UBC core domain is found at 15 to 178 (KQGYHILAEY…VQEQAILSRN (164 aa)). The disordered stretch occupies residues 234–266 (SSRQLDEEEANQVEKLHRGRIPEHQREESEVSL). The span at 245–266 (QVEKLHRGRIPEHQREESEVSL) shows a compositional bias: basic and acidic residues.

The protein belongs to the ubiquitin-conjugating enzyme family. FTS subfamily.

This chain is Protein crossbronx-like, found in Drosophila melanogaster (Fruit fly).